A 667-amino-acid chain; its full sequence is Ribosomal oxygenase 1 (667 aa).

The residue at position 1 (methionine 1) is an N-acetylmethionine. Positions 1 to 11 (MDGLRASAGLL) are enriched in low complexity. The interval 1-99 (MDGLRASAGL…ATGREPHGQL (99 aa)) is disordered. Composition is skewed to basic residues over residues 12-22 (RRGRLRRRRQQ) and 35-44 (RPRKIRRQLR). Residues serine 61, serine 64, and serine 108 each carry the phosphoserine modification. Residues 322–467 (CSLRLLCPQA…DFLEAVLPLA (146 aa)) enclose the JmjC domain. Fe cation contacts are provided by histidine 368, aspartate 370, and histidine 433.

Belongs to the ROX family. NO66 subfamily. Interacts with SP7/OSX; the interaction is direct. Interacts with MYC. Interacts with PHF19; leading to its recruitment to H3K36me3 sites. It depends on Fe(2+) as a cofactor.

Its subcellular location is the nucleus. It localises to the nucleolus. The protein resides in the nucleoplasm. It carries out the reaction N(6),N(6)-dimethyl-L-lysyl(36)-[histone H3] + 2 2-oxoglutarate + 2 O2 = L-lysyl(36)-[histone H3] + 2 formaldehyde + 2 succinate + 2 CO2. The catalysed reaction is N(6)-methyl-L-lysyl-[protein] + 2-oxoglutarate + O2 = L-lysyl-[protein] + formaldehyde + succinate + CO2. The enzyme catalyses L-histidyl-[protein] + 2-oxoglutarate + O2 = (3S)-3-hydroxy-L-histidyl-[protein] + succinate + CO2. Functionally, oxygenase that can act as both a histone lysine demethylase and a ribosomal histidine hydroxylase. Specifically demethylates 'Lys-4' (H3K4me) and 'Lys-36' (H3K36me) of histone H3, thereby playing a central role in histone code. Preferentially demethylates trimethylated H3 'Lys-4' (H3K4me3) and monomethylated H3 'Lys-4' (H3K4me1) residues, while it has weaker activity for dimethylated H3 'Lys-36' (H3K36me2). Acts as a regulator of osteoblast differentiation via its interaction with SP7/OSX by demethylating H3K4me and H3K36me, thereby inhibiting SP7/OSX-mediated promoter activation. Also catalyzes demethylation of non-histone proteins, such as CGAS: demethylation of monomethylated CGAS promotes interaction between CGAS and PARP1, followed by PARP1 inactivation. Also catalyzes the hydroxylation of 60S ribosomal protein L8 on 'His-216', thereby playing a role in ribosome biogenesis. Participates in MYC-induced transcriptional activation. This chain is Ribosomal oxygenase 1 (RIOX1), found in Bos taurus (Bovine).